The primary structure comprises 310 residues: Olfactory receptor 5P53 (310 aa).

The Extracellular segment spans residues 1 to 25 (MEAENHTTVAELIILGLTEDPKLCI). A glycan (N-linked (GlcNAc...) asparagine) is linked at Asn-5. A helical transmembrane segment spans residues 26 to 46 (VFFVIFLGVYIVTLVGNISII). Residues 47–54 (TLIRISSQ) are Cytoplasmic-facing. A helical transmembrane segment spans residues 55 to 75 (LHTPMYLFLSHLAFVDILYST). The Extracellular portion of the chain corresponds to 76–99 (SVSVIMHMELLGHGLALPVAACAA). A disulfide bond links Cys-97 and Cys-189. The helical transmembrane segment at 100-120 (QLCITVSFGSAECFLLAAMAY) threads the bilayer. The Cytoplasmic portion of the chain corresponds to 121-133 (DRYVAICSPLLYS). A helical transmembrane segment spans residues 134–154 (TLMSPRVCFLLLGMSYVGGCM). Residues 155-196 (NGWTFTGCLLSLSFCGPNQIDHFFCDFSPLLKLSCSDVSIIG) are Extracellular-facing. Residues 197–217 (IIPSISSGSIIVVTVFVIAVS) traverse the membrane as a helical segment. At 218-237 (YIYILITILNMRSTEGRHKA) the chain is on the cytoplasmic side. A helical membrane pass occupies residues 238–258 (FSTCTSHLTAVTLYYGTITFI). At 259 to 271 (YVMPKSNYSTEQN) the chain is on the extracellular side. N-linked (GlcNAc...) asparagine glycosylation is present at Asn-265. Residues 272-292 (KVLSVFYTVVIPMLNPLIYSL) form a helical membrane-spanning segment. The Cytoplasmic segment spans residues 293–310 (RNRDVKEALRKATVRVYS).

The protein belongs to the G-protein coupled receptor 1 family.

The protein resides in the cell membrane. Functionally, potential odorant receptor. The chain is Olfactory receptor 5P53 from Mus musculus (Mouse).